The sequence spans 372 residues: Dual-specificity RNA methyltransferase RlmN (372 aa).

The active-site Proton acceptor is the Glu94. In terms of domain architecture, Radical SAM core spans 100 to 339; it reads DGDRATLCVS…VTIRKTRGDD (240 aa). Cys107 and Cys344 form a disulfide bridge. Positions 114, 118, and 121 each coordinate [4Fe-4S] cluster. S-adenosyl-L-methionine-binding positions include 168–169, Ser200, 222–224, and Asn301; these read GE and SLH. Cys344 functions as the S-methylcysteine intermediate in the catalytic mechanism.

It belongs to the radical SAM superfamily. RlmN family. Requires [4Fe-4S] cluster as cofactor.

The protein localises to the cytoplasm. The enzyme catalyses adenosine(2503) in 23S rRNA + 2 reduced [2Fe-2S]-[ferredoxin] + 2 S-adenosyl-L-methionine = 2-methyladenosine(2503) in 23S rRNA + 5'-deoxyadenosine + L-methionine + 2 oxidized [2Fe-2S]-[ferredoxin] + S-adenosyl-L-homocysteine. It carries out the reaction adenosine(37) in tRNA + 2 reduced [2Fe-2S]-[ferredoxin] + 2 S-adenosyl-L-methionine = 2-methyladenosine(37) in tRNA + 5'-deoxyadenosine + L-methionine + 2 oxidized [2Fe-2S]-[ferredoxin] + S-adenosyl-L-homocysteine. Specifically methylates position 2 of adenine 2503 in 23S rRNA and position 2 of adenine 37 in tRNAs. m2A2503 modification seems to play a crucial role in the proofreading step occurring at the peptidyl transferase center and thus would serve to optimize ribosomal fidelity. The polypeptide is Dual-specificity RNA methyltransferase RlmN (Aliivibrio fischeri (strain MJ11) (Vibrio fischeri)).